A 537-amino-acid chain; its full sequence is CTP synthase (537 aa).

The segment at 1–265 (MTKFIFVTGG…GKYLVKRLGL (265 aa)) is amidoligase domain. Ser13 lines the CTP pocket. A UTP-binding site is contributed by Ser13. Residue 14–19 (GLGKGI) coordinates ATP. Tyr54 is a binding site for L-glutamine. Position 71 (Asp71) interacts with ATP. Mg(2+) contacts are provided by Asp71 and Glu139. CTP-binding positions include 146–148 (DIE), 186–191 (KTKPTQ), and Lys222. UTP-binding positions include 186-191 (KTKPTQ) and Lys222. The Glutamine amidotransferase type-1 domain maps to 290–532 (EIAIVGKYVK…VKAAKEYKQE (243 aa)). Residue Gly351 participates in L-glutamine binding. The active-site Nucleophile; for glutamine hydrolysis is Cys378. Residues 379–382 (FGFQ), Glu402, and Arg459 each bind L-glutamine. Active-site residues include His505 and Glu507.

Belongs to the CTP synthase family. In terms of assembly, homotetramer.

It carries out the reaction UTP + L-glutamine + ATP + H2O = CTP + L-glutamate + ADP + phosphate + 2 H(+). The catalysed reaction is L-glutamine + H2O = L-glutamate + NH4(+). The enzyme catalyses UTP + NH4(+) + ATP = CTP + ADP + phosphate + 2 H(+). It functions in the pathway pyrimidine metabolism; CTP biosynthesis via de novo pathway; CTP from UDP: step 2/2. Its activity is regulated as follows. Allosterically activated by GTP, when glutamine is the substrate; GTP has no effect on the reaction when ammonia is the substrate. The allosteric effector GTP functions by stabilizing the protein conformation that binds the tetrahedral intermediate(s) formed during glutamine hydrolysis. Inhibited by the product CTP, via allosteric rather than competitive inhibition. Functionally, catalyzes the ATP-dependent amination of UTP to CTP with either L-glutamine or ammonia as the source of nitrogen. Regulates intracellular CTP levels through interactions with the four ribonucleotide triphosphates. This Pyrococcus abyssi (strain GE5 / Orsay) protein is CTP synthase.